A 195-amino-acid chain; its full sequence is Shikimate kinase (195 aa).

31-36 (GAGKSC) lines the ATP pocket. Mg(2+) is bound at residue serine 35. Substrate-binding residues include aspartate 53, arginine 77, and glycine 99. Residue arginine 137 participates in ATP binding. Residue arginine 156 participates in substrate binding.

This sequence belongs to the shikimate kinase family. Monomer. Requires Mg(2+) as cofactor.

The protein localises to the cytoplasm. The enzyme catalyses shikimate + ATP = 3-phosphoshikimate + ADP + H(+). The protein operates within metabolic intermediate biosynthesis; chorismate biosynthesis; chorismate from D-erythrose 4-phosphate and phosphoenolpyruvate: step 5/7. Catalyzes the specific phosphorylation of the 3-hydroxyl group of shikimic acid using ATP as a cosubstrate. This chain is Shikimate kinase, found in Paramagnetospirillum magneticum (strain ATCC 700264 / AMB-1) (Magnetospirillum magneticum).